Here is a 439-residue protein sequence, read N- to C-terminus: Paraneoplastic antigen-like protein 8A (439 aa).

The tract at residues 213–439 (ETPNNWNATE…RRATNESRKV (227 aa)) is disordered. Residues 231–249 (LVRRAGAKSRSRRKKQKKN) are compositionally biased toward basic residues. Positions 403-419 (KAPQGQQPAEATASTSR) are enriched in polar residues. Over residues 423-439 (AKPEGSPRRATNESRKV) the composition is skewed to basic and acidic residues.

The protein belongs to the PNMA family.

This is Paraneoplastic antigen-like protein 8A (PNMA8A) from Pongo abelii (Sumatran orangutan).